The following is a 614-amino-acid chain: MKRDRLGRFLSPGSSRQCGASDGGGGVSRTRGRPSLSGGPRVDGATARRAWGPVGSCGDAGEDGADEAGAGRALAMGHCRLCHGKFSSRSLRSISERAPGASMERPSAEERVLVRDFQRLLGVAVRQDPTLSPFVCKSCHAQFYQCHSLLKSFLQRVNASPAGRRKPCAKVGAQPPTGAEEGACLVDLITSSPQCLHGLVGWVHGHAASCGALPHLQRTLSSEYCGVIQVVWGCDQGHDYTMDTSSSCKAFLLDSALAVKWPWDKETAPRLPQHRGWNPGDAPQTSQGRGTGTPVGAETKTLPSTDVAQPPSDSDAVGPRSGFPPQPSLPLCRAPGQLGEKQLPSSTSDDRVKDEFSDLSEGDVLSEDENDKKQNAQSSDESFEPYPERKVSGKKSESKEAKKSEEPRIRKKPGPKPGWKKKLRCEREELPTIYKCPYQGCTAVYRGADGMKKHIKEHHEEVRERPCPHPGCNKVFMIDRYLQRHVKLIHTEVRNYICDECGQTFKQRKHLLVHQMRHSGAKPLQCEVCGFQCRQRASLKYHMTKHKAETELDFACDQCGRRFEKAHNLNVHMSMVHPLTQTQDKALPLEAEPPPGPPSPSVTTEGQAVKPEPT.

The disordered stretch occupies residues 1–50; it reads MKRDRLGRFLSPGSSRQCGASDGGGGVSRTRGRPSLSGGPRVDGATARRA. Positions 77–163 constitute a ZAD domain; the sequence is GHCRLCHGKF…LQRVNASPAG (87 aa). Zn(2+)-binding residues include cysteine 79, cysteine 82, cysteine 136, and cysteine 139. A disordered region spans residues 268–420; that stretch reads APRLPQHRGW…KKPGPKPGWK (153 aa). The segment covering 357–369 has biased composition (acidic residues); that stretch reads SDLSEGDVLSEDE. The segment covering 386 to 408 has biased composition (basic and acidic residues); the sequence is YPERKVSGKKSESKEAKKSEEPR. Over residues 409 to 420 the composition is skewed to basic residues; the sequence is IRKKPGPKPGWK. 5 consecutive C2H2-type zinc fingers follow at residues 434-458, 465-490, 496-518, 524-546, and 554-577; these read YKCP…IKEH, RPCP…KLIH, YICD…QMRH, LQCE…MTKH, and FACD…SMVH. The interval 583–614 is disordered; it reads QDKALPLEAEPPPGPPSPSVTTEGQAVKPEPT. The segment covering 591 to 600 has biased composition (pro residues); the sequence is AEPPPGPPSP.

Its subcellular location is the nucleus. It is found in the chromosome. It localises to the centromere. The protein localises to the kinetochore. May be involved in transcriptional regulation. The polypeptide is Zinc finger protein 276 (ZNF276) (Homo sapiens (Human)).